Here is a 150-residue protein sequence, read N- to C-terminus: UPF0756 membrane protein YPN_1328 (150 aa).

The next 4 membrane-spanning stretches (helical) occupy residues 16–36 (ALGI…LIAI), 51–71 (YGLT…IASG), 88–108 (ILAI…VSLM), and 114–134 (VVAG…GVPV).

The protein belongs to the UPF0756 family.

It localises to the cell membrane. This chain is UPF0756 membrane protein YPN_1328, found in Yersinia pestis bv. Antiqua (strain Nepal516).